The following is a 391-amino-acid chain: MARVGVLLLNLGGPERIKDVGPFLYNLFSDPEIIRLPVRAFQKPLAWLISLLRSSKSQEAYRSIGGGSPLRRITEQQARELQSYLRNIGIDATTYVAMRYWHPFTESAVADMKADGVSEVVVLPLYPHFSISTSGSSFRELKRLKDGDDEFAELSIRCIRSWFDHPAYVSSMAELIKKQILACDLPQESHVFFTAHGVPKSYVEEAGDPYQDQIQNCSLLIIDQLENSLGFTNSFSLAYQSRVGPEEWLKPYTEEVLEKLGKSGVKELVVVPISFVSEHIETLQEIDIEYKEIAQKNGIVNFKRVPALDVYPLFIEGLADLVSSCLNGEGISLEEASKLPERVKLYPQEKWQWGWNNSSEVWNGRVAMIVFLSFLMELIIGGGPLHQIGLL.

Residues H196 and E281 each contribute to the Fe cation site.

Belongs to the ferrochelatase family.

The protein resides in the cytoplasm. It catalyses the reaction heme b + 2 H(+) = protoporphyrin IX + Fe(2+). It participates in porphyrin-containing compound metabolism; protoheme biosynthesis; protoheme from protoporphyrin-IX: step 1/1. Catalyzes the ferrous insertion into protoporphyrin IX. The polypeptide is Ferrochelatase (Prochlorococcus marinus (strain NATL2A)).